The primary structure comprises 398 residues: uncharacterized protein (398 aa).

Residues 313–398 (KTIKSSGSKT…TSKSIKYYEV (86 aa)) are disordered. Low complexity-rich tracts occupy residues 314–333 (TIKS…TNKS) and 343–398 (GSKT…YYEV).

This is an uncharacterized protein from Acanthamoeba polyphaga mimivirus (APMV).